A 983-amino-acid chain; its full sequence is MTVENAKALFFERNLCALTPLDPERASAFLADLEARAREEELAGVVALLGRKKAADFLSAILDLSPFIREALTRQPRILDRIVSATPESALEAILDEISASGTVAGVSESELMTSLRQLKREAHVLIALCDLARIFNTETTTDRLTDLAEACTGAAVRFLLLDADAAGRINLPDRSNPEKDCGWIVLGMGKFGARELNYSSDIDLIVFIDETKPAIGDPYECVDTFSRLTRRLVRILQDRTGDGYVFRVDLRLRPDPGSTPLAIPVGAALHYYEGRGQNWERAAMIKARPVAGDRLSGKQILAELSPYVWRKYLDYAAIADVHSIKRQIHAHKGHGDIAVRGHNVKLGRGGIREIEFFVQTQQLIAGGRFPELRGNQTVPMLARLAERGWITQQARDALAQEYWFLRDVEHRIQMIADEQTHILPEDDEGFARVSHMMGYADPAEFSEIFLAALKVVEKQYAALFEQAPELGAASGNLVFTGDVDDPGTLETLSAMGYERSSDICRVIRTWHFGRYRATQSAEARERLTELTPALLKAFAETRRADESLLRFDGFLQGLPAGIQLFSLLQSNPRLLNLLVMIMSAAPRLADIITRNPHVFDGLLDPAIFSEVPTRAYLEERLRAFLGSATDFEEVLDRLRIFAAEHRFLIGIRLLTGAINGVRAGQAFSDLAELMVGRALEAVEAELQRRHGKVKGAKVALLAMGKLGSRELTAGSDVDLILLYDHDKDAEESDGEKPLAPSKYYIRLTQRLIAALSAPTAEGVLYEVDMRLRPSGNKGPVATHIEAFGKYQRNDAWTWEHMALTRARPIHGDEAFIARIKVDIEDVLAMPRDVRKLAGDVREMRELIAQEKPPRDDWDLKLKPGGIIDLEFIAQFATLAGYVKKTPRPFATEEVLANLDPFFADPAMVDGLVEAHRFYTNLSQAIRLCLNDSAGLDQFPPGMRELLCRVAGLPDIERIEYELLEHYRLVRAAFDKLVGHGAD.

Residues 1–468 form an adenylyl removase region; sequence MTVENAKALF…KQYAALFEQA (468 aa). An adenylyl transferase region spans residues 473–983; it reads AASGNLVFTG…FDKLVGHGAD (511 aa).

Belongs to the GlnE family. It depends on Mg(2+) as a cofactor.

It catalyses the reaction [glutamine synthetase]-O(4)-(5'-adenylyl)-L-tyrosine + phosphate = [glutamine synthetase]-L-tyrosine + ADP. The enzyme catalyses [glutamine synthetase]-L-tyrosine + ATP = [glutamine synthetase]-O(4)-(5'-adenylyl)-L-tyrosine + diphosphate. In terms of biological role, involved in the regulation of glutamine synthetase GlnA, a key enzyme in the process to assimilate ammonia. When cellular nitrogen levels are high, the C-terminal adenylyl transferase (AT) inactivates GlnA by covalent transfer of an adenylyl group from ATP to specific tyrosine residue of GlnA, thus reducing its activity. Conversely, when nitrogen levels are low, the N-terminal adenylyl removase (AR) activates GlnA by removing the adenylyl group by phosphorolysis, increasing its activity. The regulatory region of GlnE binds the signal transduction protein PII (GlnB) which indicates the nitrogen status of the cell. In Brucella melitensis biotype 1 (strain ATCC 23456 / CCUG 17765 / NCTC 10094 / 16M), this protein is Bifunctional glutamine synthetase adenylyltransferase/adenylyl-removing enzyme.